Reading from the N-terminus, the 360-residue chain is Serine/threonine-protein phosphatase 2A activator 2 (360 aa).

Belongs to the PTPA-type PPIase family.

Its subcellular location is the cytoplasm. The enzyme catalyses [protein]-peptidylproline (omega=180) = [protein]-peptidylproline (omega=0). PPIases accelerate the folding of proteins. It catalyzes the cis-trans isomerization of proline imidic peptide bonds in oligopeptides. Acts as a regulatory subunit for PP2A-like phosphatases modulating their activity or substrate specificity, probably by inducing a conformational change in the catalytic subunit, a direct target of the PPIase. Can reactivate inactive phosphatase PP2A-phosphatase methylesterase complexes (PP2Ai) in presence of ATP and Mg(2+) by dissociating the inactive form from the complex. The protein is Serine/threonine-protein phosphatase 2A activator 2 (RRD2) of Kluyveromyces lactis (strain ATCC 8585 / CBS 2359 / DSM 70799 / NBRC 1267 / NRRL Y-1140 / WM37) (Yeast).